The following is a 210-amino-acid chain: Ribonuclease HII (210 aa).

Positions 18–207 (RFVAGVDEVG…VHKILCKEET (190 aa)) constitute an RNase H type-2 domain. A divalent metal cation is bound by residues D24, E25, and D115.

Belongs to the RNase HII family. It depends on Mn(2+) as a cofactor. Requires Mg(2+) as cofactor.

The protein localises to the cytoplasm. It catalyses the reaction Endonucleolytic cleavage to 5'-phosphomonoester.. Functionally, endonuclease that specifically degrades the RNA of RNA-DNA hybrids. This chain is Ribonuclease HII, found in Paracoccus denitrificans (strain Pd 1222).